Consider the following 320-residue polypeptide: MLHYSNCNKICEKTVMNQRTIKTAIAVTGTGLHSGQPVDLEFQPQPIDTGIVFERSDIVGSTPIPASAFLVQDTMMSSNLVFGGTRVGTVEHLLSAIAGLGVDNLLIRVSASEIPIMDGSAAPFVGLLLQAGLCEQDALKKFIRIVRTVRVKVDDKWAELRPYSGFELNFEIDFDHPAIDKDFQHAQLQFSTQNFIEQLSSARTFGFLRDIEAMRQNNLALGGSMDNAIVIDEANILNEEGLRFNDEFVRHKILDALGDLYLIGYPILGRFNAYKSGHALNNLLVREILSDHNNFEIVTFDDNVTCPIEYLPLNGITVEG.

3 residues coordinate Zn(2+): His92, His251, and Asp255. His278 (proton donor) is an active-site residue.

The protein belongs to the LpxC family. It depends on Zn(2+) as a cofactor.

The catalysed reaction is a UDP-3-O-[(3R)-3-hydroxyacyl]-N-acetyl-alpha-D-glucosamine + H2O = a UDP-3-O-[(3R)-3-hydroxyacyl]-alpha-D-glucosamine + acetate. It functions in the pathway glycolipid biosynthesis; lipid IV(A) biosynthesis; lipid IV(A) from (3R)-3-hydroxytetradecanoyl-[acyl-carrier-protein] and UDP-N-acetyl-alpha-D-glucosamine: step 2/6. Functionally, catalyzes the hydrolysis of UDP-3-O-myristoyl-N-acetylglucosamine to form UDP-3-O-myristoylglucosamine and acetate, the committed step in lipid A biosynthesis. The chain is UDP-3-O-acyl-N-acetylglucosamine deacetylase from Psychrobacter arcticus (strain DSM 17307 / VKM B-2377 / 273-4).